We begin with the raw amino-acid sequence, 1269 residues long: DNA-directed RNA polymerase subunit beta (1269 aa).

The protein belongs to the RNA polymerase beta chain family. The RNAP catalytic core consists of 2 alpha, 1 beta, 1 beta' and 1 omega subunit. When a sigma factor is associated with the core the holoenzyme is formed, which can initiate transcription.

The enzyme catalyses RNA(n) + a ribonucleoside 5'-triphosphate = RNA(n+1) + diphosphate. Functionally, DNA-dependent RNA polymerase catalyzes the transcription of DNA into RNA using the four ribonucleoside triphosphates as substrates. The protein is DNA-directed RNA polymerase subunit beta of Porphyromonas gingivalis (strain ATCC BAA-308 / W83).